The chain runs to 714 residues: Neutral ceramidase A (714 aa).

The first 23 residues, 1–23 (MKRSIVFIYSLVILLLSVGFIDA), serve as a signal peptide directing secretion. Residues asparagine 218 and asparagine 246 are each glycosylated (N-linked (GlcNAc...) asparagine). Serine 293 acts as the Nucleophile in catalysis. N-linked (GlcNAc...) asparagine glycans are attached at residues asparagine 353, asparagine 373, asparagine 416, asparagine 571, asparagine 610, and asparagine 700.

This sequence belongs to the neutral ceramidase family.

Its subcellular location is the secreted. The enzyme catalyses an N-acylsphing-4-enine + H2O = sphing-4-enine + a fatty acid. Functionally, hydrolyzes the sphingolipid ceramide into sphingosine and free fatty acid at an optimal pH of 3.0. Has no activity toward glycosphingolipids, such as GalCer and Galbeta1-3GalNAcbeta1-4(NeuAcalpha2-3)Galbeta1-4Glcbeta1-1'Cer or sphingomyelin. This is Neutral ceramidase A (dcd2A) from Dictyostelium discoideum (Social amoeba).